We begin with the raw amino-acid sequence, 395 residues long: ATP phosphoribosyltransferase regulatory subunit (395 aa).

This sequence belongs to the class-II aminoacyl-tRNA synthetase family. HisZ subfamily. Heteromultimer composed of HisG and HisZ subunits.

It localises to the cytoplasm. The protein operates within amino-acid biosynthesis; L-histidine biosynthesis; L-histidine from 5-phospho-alpha-D-ribose 1-diphosphate: step 1/9. Required for the first step of histidine biosynthesis. May allow the feedback regulation of ATP phosphoribosyltransferase activity by histidine. The polypeptide is ATP phosphoribosyltransferase regulatory subunit (Pseudomonas syringae pv. syringae (strain B728a)).